The sequence spans 196 residues: ATP-dependent Clp protease proteolytic subunit (196 aa).

Catalysis depends on S101, which acts as the Nucleophile. The active site involves H126.

Belongs to the peptidase S14 family. Component of the chloroplastic Clp protease core complex.

It localises to the plastid. The protein localises to the chloroplast stroma. The enzyme catalyses Hydrolysis of proteins to small peptides in the presence of ATP and magnesium. alpha-casein is the usual test substrate. In the absence of ATP, only oligopeptides shorter than five residues are hydrolyzed (such as succinyl-Leu-Tyr-|-NHMec, and Leu-Tyr-Leu-|-Tyr-Trp, in which cleavage of the -Tyr-|-Leu- and -Tyr-|-Trp bonds also occurs).. Cleaves peptides in various proteins in a process that requires ATP hydrolysis. Has a chymotrypsin-like activity. Plays a major role in the degradation of misfolded proteins. The sequence is that of ATP-dependent Clp protease proteolytic subunit from Nicotiana tabacum (Common tobacco).